A 105-amino-acid polypeptide reads, in one-letter code: Class II hydrophobin 1 (105 aa).

A signal peptide spans 1–15 (MQVLLIATLVASVLA). 4 cysteine pairs are disulfide-bonded: Cys-38/Cys-87, Cys-48/Cys-78, Cys-49/Cys-58, and Cys-88/Cys-99.

Belongs to the cerato-ulmin hydrophobin family. In terms of assembly, homotetramer. Further self-assembles to form highly ordered films at water-air interfaces through intermolecular interactions.

The protein resides in the secreted. The protein localises to the cell wall. Functionally, aerial growth, conidiation, and dispersal of filamentous fungi in the environment rely upon a capability of their secreting small amphipathic proteins called hydrophobins (HPBs) with low sequence identity. Class I can self-assemble into an outermost layer of rodlet bundles on aerial cell surfaces, conferring cellular hydrophobicity that supports fungal growth, development and dispersal; whereas Class II form highly ordered films at water-air interfaces through intermolecular interactions but contribute nothing to the rodlet structure. HYD1 is a class II hydrophobin that plays roles in conidiation and cuticle-bypassing infection by regulating the transcripts of frequency clock protein frq, and velvet protein vosA, as well as primordium formation via the mitogen-activated protein kinase signaling pathway. Also participates in stress response, including tolerance of mycelia to osmotic and oxidative stresses, and conidia to high or low temperature. Acts as a defensive factor against Calcarisporium cordycipiticola infection, probably via the formation of a physical barrier to inhibit the pathogen infection owing to its hydrophobicity or binding to the effector of C.cordycipiticola, hindering the recognition of the pathogen. Finally, regulates the transcription of the AreA transcription factor at different developmental stages via a positive feedback loop. This is Class II hydrophobin 1 from Cordyceps militaris (Caterpillar fungus).